Reading from the N-terminus, the 247-residue chain is Carbonic anhydrase (247 aa).

An N-terminal signal peptide occupies residues 1–34 (MMFNKQIFTILILSLSLALAGSGCISEGAEDNVA). Substrate is bound at residue 93-95 (RSD). E96 acts as the Proton donor/acceptor in catalysis. Position 109–110 (109–110 (QD)) interacts with substrate. H115 is a binding site for Zn(2+). E118 is an active-site residue. Residues H151 and H156 each contribute to the Zn(2+) site. A substrate-binding site is contributed by N236.

It belongs to the gamma-class carbonic anhydrase family. In terms of assembly, homotrimer. Zn(2+) is required as a cofactor.

The protein resides in the secreted. The catalysed reaction is hydrogencarbonate + H(+) = CO2 + H2O. Reversible hydration of carbon dioxide. Important for growth on acetate. As a probably extracellular enzyme, it may support a H(+)/CH(3)COO(-) symport mechanism and/or conversion of CO(2) to HCO(3)(-), removing excess CO(2) produced by growth on acetate. This Methanosarcina thermophila (strain ATCC 43570 / DSM 1825 / OCM 12 / VKM B-1830 / TM-1) protein is Carbonic anhydrase.